A 580-amino-acid chain; its full sequence is Arginine--tRNA ligase (580 aa).

Positions 131–141 (ANPTGPMHVGH) match the 'HIGH' region motif.

The protein belongs to the class-I aminoacyl-tRNA synthetase family. As to quaternary structure, monomer.

It localises to the cytoplasm. The catalysed reaction is tRNA(Arg) + L-arginine + ATP = L-arginyl-tRNA(Arg) + AMP + diphosphate. The polypeptide is Arginine--tRNA ligase (Cereibacter sphaeroides (strain KD131 / KCTC 12085) (Rhodobacter sphaeroides)).